Reading from the N-terminus, the 370-residue chain is Protein PAM71, chloroplastic (370 aa).

The segment at 1 to 38 (MLSLNLSESLRIPFQNPRPPKSDFSSTSSSPSSSSRRC) is disordered. A chloroplast-targeting transit peptide spans 1–73 (MLSLNLSESL…RNESQQLGFR (73 aa)). Residues 22-38 (SDFSSTSSSPSSSSRRC) are compositionally biased toward low complexity. The Stromal segment spans residues 74–113 (CFQRNDAACYLEKAESEEHDRNLDVLVESSIAHSRREIQR). The helical transmembrane segment at 114-134 (VLMFLAVSGSVALLGTDPAFA) threads the bilayer. The Lumenal, thylakoid segment spans residues 135 to 161 (ASSIPNVTQSLVTSFGDLGDISSGFAS). Residues 162 to 182 (AFLLIFFSELGDKTFFIAALL) form a helical membrane-spanning segment. At 183–188 (AARNSA) the chain is on the stromal side. The chain crosses the membrane as a helical span at residues 189-209 (ATVFVGTFGALGIMTIISVVL). The Lumenal, thylakoid portion of the chain corresponds to 210–228 (GRTFHYVDEVLPFRFGGTD). Residues 229-249 (LPIDDIAAVCLLVYFGVSTLL) form a helical membrane-spanning segment. The Stromal portion of the chain corresponds to 250–275 (DAVSDEGKADEEQKEAELAVSELSGN). A helical membrane pass occupies residues 276–296 (GAGIVAAANTIISTFALVFVA). The Lumenal, thylakoid segment spans residues 297–315 (EWGDKSFFSTIALAAASSP). Residues 316 to 336 (LGVIAGALAGHGAATLLAVLG) traverse the membrane as a helical segment. Residues 337–348 (GSLLGNFLSEKA) are Stromal-facing. A helical membrane pass occupies residues 349 to 369 (IAYVGGVLFLVFAAVTVAEIV). Position 370 (Thr370) is a topological domain, lumenal, thylakoid.

It belongs to the GDT1 family. As to quaternary structure, homodimer.

The protein localises to the plastid. It is found in the chloroplast membrane. Its subcellular location is the thylakoid. Its function is as follows. Mn(2+)/H(+) exchanger, which transport Mn(2+)from the chloroplast stroma into the acidic thylakoid lumen. Might be a chloroplast-localized Ca(2+)/H(+) antiporter. Regulates Ca(2+), Mn(2+) and pH homeostasis. Required for chloroplast development. The chain is Protein PAM71, chloroplastic from Arabidopsis thaliana (Mouse-ear cress).